A 514-amino-acid chain; its full sequence is ATP synthase subunit alpha (514 aa).

170 to 177 serves as a coordination point for ATP; it reads GDRQIGKT.

This sequence belongs to the ATPase alpha/beta chains family. In terms of assembly, F-type ATPases have 2 components, CF(1) - the catalytic core - and CF(0) - the membrane proton channel. CF(1) has five subunits: alpha(3), beta(3), gamma(1), delta(1), epsilon(1). CF(0) has three main subunits: a(1), b(2) and c(9-12). The alpha and beta chains form an alternating ring which encloses part of the gamma chain. CF(1) is attached to CF(0) by a central stalk formed by the gamma and epsilon chains, while a peripheral stalk is formed by the delta and b chains.

The protein resides in the cell inner membrane. The enzyme catalyses ATP + H2O + 4 H(+)(in) = ADP + phosphate + 5 H(+)(out). In terms of biological role, produces ATP from ADP in the presence of a proton gradient across the membrane. The alpha chain is a regulatory subunit. This Pseudomonas fluorescens (strain ATCC BAA-477 / NRRL B-23932 / Pf-5) protein is ATP synthase subunit alpha.